Reading from the N-terminus, the 576-residue chain is V-type ATP synthase alpha chain (576 aa).

Residue glycine 238–threonine 245 coordinates ATP.

The protein belongs to the ATPase alpha/beta chains family.

The enzyme catalyses ATP + H2O + 4 H(+)(in) = ADP + phosphate + 5 H(+)(out). Its function is as follows. Produces ATP from ADP in the presence of a proton gradient across the membrane. The V-type alpha chain is a catalytic subunit. This chain is V-type ATP synthase alpha chain, found in Borrelia recurrentis (strain A1).